We begin with the raw amino-acid sequence, 99 residues long: High mobility group protein I (99 aa).

Residues 1 to 99 form a disordered region; sequence MSDSPVKKGR…ADTEEVNSSD (99 aa). A Phosphoserine; by CDC2 and MAPK modification is found at serine 4. The segment at residues 7-19 is a DNA-binding region (a.T hook 1); sequence KKGRGRPAKAKPE. Residues 16–46 are compositionally biased toward basic and acidic residues; the sequence is AKPEETASPKAAKKEEKKVEEVPKKIEESTK. The residue at position 23 (serine 23) is a Phosphoserine; by MAPK. A DNA-binding region (a.T hook 2) is located at residues 54–66; sequence KKGRGRPSKGDKA. Phosphoserine; by PKC is present on serine 73. A DNA-binding region (a.T hook 3) is located at residues 74 to 86; sequence GKGRGRPAKNAKK. Residues 90 to 99 show a composition bias toward acidic residues; the sequence is ADTEEVNSSD.

It belongs to the HMGA family. Post-translationally, phosphorylated in a cell-cycle dependent manner; substantially reduced in cells that have finished proliferating and are differentiated. Phosphorylation at Ser-4 and Ser-23 results in a 10-fold weakening of DNA-binding activity and altered the mode of protein-DNA interaction.

The protein resides in the nucleus. Its subcellular location is the nucleolus. It localises to the chromosome. In terms of biological role, binds preferentially to the minor groove of A+T rich regions in double-stranded DNA via the second and third DBA-binding domains. It is suggested that these proteins could function in nucleosome phasing and in the 3'-end processing of mRNA transcripts. They are also involved in the transcription regulation of genes containing, or in close proximity to A+T-rich regions. The polypeptide is High mobility group protein I (Chironomus tentans (Midge)).